Here is a 173-residue protein sequence, read N- to C-terminus: ATP-dependent protease subunit HslV (173 aa).

Thr-2 is an active-site residue. Na(+)-binding residues include Gly-158, Asp-161, and Ser-164.

The protein belongs to the peptidase T1B family. HslV subfamily. In terms of assembly, a double ring-shaped homohexamer of HslV is capped on each side by a ring-shaped HslU homohexamer. The assembly of the HslU/HslV complex is dependent on binding of ATP.

It is found in the cytoplasm. It catalyses the reaction ATP-dependent cleavage of peptide bonds with broad specificity.. Its activity is regulated as follows. Allosterically activated by HslU binding. Its function is as follows. Protease subunit of a proteasome-like degradation complex believed to be a general protein degrading machinery. In Glaesserella parasuis serovar 5 (strain SH0165) (Haemophilus parasuis), this protein is ATP-dependent protease subunit HslV.